Consider the following 374-residue polypeptide: Phospho-N-acetylmuramoyl-pentapeptide-transferase (374 aa).

A run of 10 helical transmembrane segments spans residues 3 to 23 (AVIV…PIAI), 52 to 72 (MGGV…HLAL), 85 to 105 (PTIT…VGFI), 125 to 145 (LLGQ…FPST), 170 to 190 (IPAL…VVMA), 201 to 221 (LDGL…LIAF), 244 to 264 (PLEI…FLWW), 271 to 291 (IFMG…MAMS), 294 to 314 (TILL…SVVI), and 350 to 370 (FWII…SEFL).

Belongs to the glycosyltransferase 4 family. MraY subfamily. It depends on Mg(2+) as a cofactor.

The protein resides in the cell membrane. The catalysed reaction is UDP-N-acetyl-alpha-D-muramoyl-L-alanyl-gamma-D-glutamyl-meso-2,6-diaminopimeloyl-D-alanyl-D-alanine + di-trans,octa-cis-undecaprenyl phosphate = di-trans,octa-cis-undecaprenyl diphospho-N-acetyl-alpha-D-muramoyl-L-alanyl-D-glutamyl-meso-2,6-diaminopimeloyl-D-alanyl-D-alanine + UMP. It participates in cell wall biogenesis; peptidoglycan biosynthesis. Its function is as follows. Catalyzes the initial step of the lipid cycle reactions in the biosynthesis of the cell wall peptidoglycan: transfers peptidoglycan precursor phospho-MurNAc-pentapeptide from UDP-MurNAc-pentapeptide onto the lipid carrier undecaprenyl phosphate, yielding undecaprenyl-pyrophosphoryl-MurNAc-pentapeptide, known as lipid I. The sequence is that of Phospho-N-acetylmuramoyl-pentapeptide-transferase from Salinispora arenicola (strain CNS-205).